The following is a 504-amino-acid chain: MENQLWQSTLGCCSQYQESPQDAENILFLLLGLIILVNISINVTTVIWHGLQNAIDKMFSRMHQKTAEVQVTECPPKEPQPANVQDVHIHCVLDPVQVKMAQPTQCSSSSTHYFRKHSNDRRSRRRYCYPRGSLQIRQSNQQQSCHSRQQRLRNNRQFSHGYPPFRKQRQSHKASQTRPMPFFDLEDRDSLLEDDQSCPHPKQPRRSRGGLYKPVRLASNAGLWGRQGGILASLPLPSLYLSPEMRRLPKRVEAKSELRLQGFGPHYSQSRICGNVEAEQWASSPPPPRRLLPNPSWVTVGYSPFPSGGHIPYDARDQWRRGTEGCEPPPAFVSRNLRSDAQGYRDHSSSQAHRQNFPSYTHSQPNHSPPQSVGYSSRESHEVRRRAPDWSEAFPSRHPLTTSTSLTALGEASYQRAPTASSGLVIPHSSQRLAEGQISDPTPPATTFVPLSRNPGGNANYQVYDSLELKRQVQENRGRASSLPPPSTSASRPSLHRSRTGKLN.

Residues 26–46 (ILFLLLGLIILVNISINVTTV) form a helical membrane-spanning segment. Over residues 103–112 (PTQCSSSSTH) the composition is skewed to polar residues. Disordered stretches follow at residues 103 to 180 (PTQC…TRPM), 313 to 402 (YDAR…PLTT), and 431 to 504 (QRLA…GKLN). Residues 113 to 128 (YFRKHSNDRRSRRRYC) show a composition bias toward basic residues. A compositionally biased stretch (polar residues) spans 135 to 147 (QIRQSNQQQSCHS). A compositionally biased stretch (basic and acidic residues) spans 313–324 (YDARDQWRRGTE). The span at 349–377 (SSQAHRQNFPSYTHSQPNHSPPQSVGYSS) shows a compositional bias: polar residues. 2 stretches are compositionally biased toward basic and acidic residues: residues 378-389 (RESHEVRRRAPD) and 467-478 (LELKRQVQENRG). The span at 494–504 (SLHRSRTGKLN) shows a compositional bias: basic residues.

The protein resides in the membrane. This is an uncharacterized protein from Rattus norvegicus (Rat).